We begin with the raw amino-acid sequence, 620 residues long: Probable protein arginine N-methyltransferase 3 (620 aa).

Residues 1-17 (MATREHELRPEQERLGE) are compositionally biased toward basic and acidic residues. The segment at 1–45 (MATREHELRPEQERLGEDREEYEDGEEEEEEEEEEEGWDDWESDG) is disordered. Positions 18–45 (DREEYEDGEEEEEEEEEEEGWDDWESDG) are enriched in acidic residues. The segment at 55 to 78 (LLCLFCSARFDSESSLFSHCASEH) adopts a C2H2-type 1 zinc-finger fold. Residues 110–137 (NKCWSCGQVFSSNSELCGHLHALEIPQL) form a C2H2-type 2; degenerate zinc finger. Positions 253–582 (DESYFGSYSS…DECPAVMIRS (330 aa)) constitute an SAM-dependent MTase PRMT-type domain. S-adenosyl-L-homocysteine-binding residues include Arg-275, Gly-299, Asp-321, Ser-323, and Glu-364. Residues Glu-383 and Glu-392 contribute to the active site.

This sequence belongs to the class I-like SAM-binding methyltransferase superfamily. Protein arginine N-methyltransferase family.

It is found in the cytoplasm. The protein localises to the cytosol. The catalysed reaction is L-arginyl-[protein] + S-adenosyl-L-methionine = N(omega)-methyl-L-arginyl-[protein] + S-adenosyl-L-homocysteine + H(+). The enzyme catalyses L-arginyl-[protein] + 2 S-adenosyl-L-methionine = N(omega),N(omega)-dimethyl-L-arginyl-[protein] + 2 S-adenosyl-L-homocysteine + 2 H(+). Its function is as follows. Protein-arginine N-methyltransferase that catalyzes both the monomethylation and asymmetric dimethylation of the guanidino nitrogens of arginine residues in target proteins, and therefore falls into the group of type I methyltransferases. This is Probable protein arginine N-methyltransferase 3 (PRMT3) from Oryza sativa subsp. indica (Rice).